The chain runs to 304 residues: Acetylglutamate kinase (304 aa).

Substrate contacts are provided by residues 64 to 65 (GG), arginine 86, and asparagine 181.

Belongs to the acetylglutamate kinase family. ArgB subfamily.

It localises to the plastid. The protein localises to the chloroplast. It carries out the reaction N-acetyl-L-glutamate + ATP = N-acetyl-L-glutamyl 5-phosphate + ADP. The protein operates within amino-acid biosynthesis; L-arginine biosynthesis; N(2)-acetyl-L-ornithine from L-glutamate: step 2/4. Catalyzes the ATP-dependent phosphorylation of N-acetyl-L-glutamate. This is Acetylglutamate kinase from Cyanidium caldarium (Red alga).